Reading from the N-terminus, the 549-residue chain is Chaperonin GroEL (549 aa).

ATP-binding positions include 30 to 33 (TLGP), K51, 87 to 91 (DGTTT), G415, and D496.

The protein belongs to the chaperonin (HSP60) family. In terms of assembly, forms a cylinder of 14 subunits composed of two heptameric rings stacked back-to-back. Interacts with the co-chaperonin GroES.

It is found in the cytoplasm. It carries out the reaction ATP + H2O + a folded polypeptide = ADP + phosphate + an unfolded polypeptide.. Together with its co-chaperonin GroES, plays an essential role in assisting protein folding. The GroEL-GroES system forms a nano-cage that allows encapsulation of the non-native substrate proteins and provides a physical environment optimized to promote and accelerate protein folding. The polypeptide is Chaperonin GroEL (Acidiphilium cryptum (strain JF-5)).